A 261-amino-acid chain; its full sequence is Prostatic glandular kallikrein-6 (261 aa).

A signal peptide spans 1–18 (MWLLILFLILSLGWNDAA). A propeptide spans 19–24 (PPGQSR) (activation peptide). The region spanning 25–258 (IIGGFNCEKN…FTSWMKKVMK (234 aa)) is the Peptidase S1 domain. Disulfide bonds link C31–C173, C50–C66, C152–C219, C184–C198, and C209–C234. H65 serves as the catalytic Charge relay system. N108 carries an N-linked (GlcNAc...) asparagine glycan. The Charge relay system role is filled by D120. S213 serves as the catalytic Charge relay system.

This sequence belongs to the peptidase S1 family. Kallikrein subfamily.

It catalyses the reaction Preferential cleavage of Arg-|-Xaa bonds in small molecule substrates. Highly selective action to release kallidin (lysyl-bradykinin) from kininogen involves hydrolysis of Met-|-Xaa or Leu-|-Xaa.. Functionally, glandular kallikreins cleave Met-Lys and Arg-Ser bonds in kininogen to release Lys-bradykinin. In Rattus norvegicus (Rat), this protein is Prostatic glandular kallikrein-6 (Klk6).